A 249-amino-acid polypeptide reads, in one-letter code: Type I iodothyronine deiodinase (249 aa).

The Extracellular segment spans residues 1-12 (MGLPQPGLWLKR). Residues 13-33 (LWVLLEVAVHVVVGKVLLILF) traverse the membrane as a helical; Signal-anchor for type III membrane protein segment. Over 34–249 (PDRVKRNILA…VRAVLEKLHS (216 aa)) the chain is Cytoplasmic. Residue U126 is part of the active site. Position 126 (U126) is a non-standard amino acid, selenocysteine.

This sequence belongs to the iodothyronine deiodinase family. Predominantly monomer. Can form homodimers but homodimerization is not essential for enzyme activity.

It localises to the cell membrane. The protein localises to the endoplasmic reticulum membrane. Its subcellular location is the basolateral cell membrane. The enzyme catalyses 3,3',5-triiodo-L-thyronine + iodide + A + H(+) = L-thyroxine + AH2. It catalyses the reaction 3,3',5'-triiodo-L-thyronine + iodide + A + H(+) = L-thyroxine + AH2. It carries out the reaction 3,3'-diiodo-L-thyronine + iodide + A + H(+) = 3,3',5'-triiodo-L-thyronine + AH2. The catalysed reaction is 3,3'-diiodo-L-thyronine + iodide + A + H(+) = 3,3',5-triiodo-L-thyronine + AH2. The enzyme catalyses 3'-iodo-L-thyronine + iodide + A + H(+) = 3',5'-diiodo-L-thyronine + AH2. It catalyses the reaction 3-iodo-L-thyronine + iodide + A + H(+) = 3,5-diiodo-L-thyronine + AH2. It carries out the reaction 3-iodo-L-thyronine + iodide + A + H(+) = 3,3'-diiodo-L-thyronine + AH2. The catalysed reaction is 3,3'-diiodothyronamine + iodide + A + H(+) = 3,3',5'-triiodothyronamine + AH2. The enzyme catalyses 3'-iodothyronamine + iodide + A + H(+) = 3',5'-diiodothyronamine + AH2. It catalyses the reaction 3-iodothyronamine + iodide + A + H(+) = 3,3'-diiodothyronamine + AH2. It carries out the reaction 3,3'-diiodothyronamine + iodide + A + H(+) = 3,3',5-triiodothyronamine + AH2. The catalysed reaction is 3-iodothyronamine + iodide + A + H(+) = 3,5-diiodothyronamine + AH2. The enzyme catalyses 3,3'-diiodo-L-thyronine sulfate + iodide + A + H(+) = 3,3',5'-triiodo-L-thyronine sulfate + AH2. It catalyses the reaction 3,3',5'-triiodo-L-thyronine sulfate + iodide + A + H(+) = L-thyroxine sulfate + AH2. It carries out the reaction 3,3'-diiodo-L-thyronine sulfate + iodide + A + H(+) = 3,3',5-triiodo-L-thyronine sulfate + AH2. Its activity is regulated as follows. Deiodination of substrates 3,3',5'-triiodothyronine, 3,3',5'-triiodothyronamine and 3',5'- diiodothyronamine are inhibited by 6n-propyl-2-thiouracil (PTU). Its function is as follows. Plays a crucial role in the metabolism of thyroid hormones (TH) and has specific roles in TH activation and inactivation by deiodination. Catalyzes the deiodination of L-thyroxine (T4) to 3,5,3'-triiodothyronine (T3), 3,3',5'-triiodothyronine (rT3) to 3,3'-diiodothyronine (3,3'-T2) and 3',5'-diiodothyronine (3',5'-T2) to 3'-monoiodothyronine (3'-T1) via outer-ring deiodination (ORD). Catalyzes the deiodination of T4 to 3,3',5'-triiodothyronine (rT3) via inner-ring deiodination (IRD). Catalyzes the deiodination of T3 to 3,3'-T2, 3,5-diiodothyronine (3,5-T2) to 3- monoiodothyronine (3-T1) and 3,3'-T2 to 3-T1 via IRD. Catalyzes the phenolic ring deiodinations of 3,3',5'-triiodothyronamine and 3',5'-diiodothyronamine. Catalyzes the phenolic ring deiodination of 3,3'-diiodothyronamine and tyrosyl ring deiodinations of 3,5,3'-triiodothyronamine and 3,5-diiodothyronamine. Catalyzes the deiodination of L-thyroxine sulfate and 3,3',5-triiodo-L-thyronine sulfate via IRD and of 3,3',5'-triiodo-L-thyronine sulfate via ORD. This is Type I iodothyronine deiodinase (DIO1) from Homo sapiens (Human).